A 194-amino-acid polypeptide reads, in one-letter code: AN1-type zinc finger protein 2A (194 aa).

AN1-type zinc fingers lie at residues 4–52 (PDLG…QKDV) and 94–142 (KIFT…RPTI). Residues C10, C15, C25, C28, C33, H36, H42, C44, C100, C105, C115, C118, C123, H126, H132, and C134 each contribute to the Zn(2+) site. The interval 145–164 (GCSPVTASESKPSGDPHPGS) is disordered.

It is found in the cytoplasm. The protein localises to the nucleus. The protein is AN1-type zinc finger protein 2A (ZFAND2A) of Pongo abelii (Sumatran orangutan).